Here is a 620-residue protein sequence, read N- to C-terminus: 1-deoxy-D-xylulose-5-phosphate synthase (620 aa).

Thiamine diphosphate-binding positions include His-80 and 121–123; that span reads GHS. Mg(2+) is bound at residue Asp-152. Thiamine diphosphate-binding positions include 153–154, Asn-181, Tyr-288, and Glu-370; that span reads GA. Asn-181 is a Mg(2+) binding site.

It belongs to the transketolase family. DXPS subfamily. As to quaternary structure, homodimer. It depends on Mg(2+) as a cofactor. The cofactor is thiamine diphosphate.

It carries out the reaction D-glyceraldehyde 3-phosphate + pyruvate + H(+) = 1-deoxy-D-xylulose 5-phosphate + CO2. It participates in metabolic intermediate biosynthesis; 1-deoxy-D-xylulose 5-phosphate biosynthesis; 1-deoxy-D-xylulose 5-phosphate from D-glyceraldehyde 3-phosphate and pyruvate: step 1/1. Its function is as follows. Catalyzes the acyloin condensation reaction between C atoms 2 and 3 of pyruvate and glyceraldehyde 3-phosphate to yield 1-deoxy-D-xylulose-5-phosphate (DXP). The protein is 1-deoxy-D-xylulose-5-phosphate synthase of Salmonella heidelberg (strain SL476).